A 127-amino-acid polypeptide reads, in one-letter code: Small ribosomal subunit protein uS13 (127 aa).

The segment at 95–127 is disordered; the sequence is GLPLRGQRTKTNARTRRGKKGAAIGGKKKATKK.

Belongs to the universal ribosomal protein uS13 family. As to quaternary structure, part of the 30S ribosomal subunit. Forms a loose heterodimer with protein S19. Forms two bridges to the 50S subunit in the 70S ribosome.

Located at the top of the head of the 30S subunit, it contacts several helices of the 16S rRNA. In the 70S ribosome it contacts the 23S rRNA (bridge B1a) and protein L5 of the 50S subunit (bridge B1b), connecting the 2 subunits; these bridges are implicated in subunit movement. Contacts the tRNAs in the A and P-sites. The sequence is that of Small ribosomal subunit protein uS13 from Herpetosiphon aurantiacus (strain ATCC 23779 / DSM 785 / 114-95).